Here is a 469-residue protein sequence, read N- to C-terminus: 3-isopropylmalate dehydratase large subunit (469 aa).

Residues C347, C408, and C411 each contribute to the [4Fe-4S] cluster site.

Belongs to the aconitase/IPM isomerase family. LeuC type 1 subfamily. Heterodimer of LeuC and LeuD. [4Fe-4S] cluster serves as cofactor.

It catalyses the reaction (2R,3S)-3-isopropylmalate = (2S)-2-isopropylmalate. It participates in amino-acid biosynthesis; L-leucine biosynthesis; L-leucine from 3-methyl-2-oxobutanoate: step 2/4. Catalyzes the isomerization between 2-isopropylmalate and 3-isopropylmalate, via the formation of 2-isopropylmaleate. The polypeptide is 3-isopropylmalate dehydratase large subunit (Actinobacillus pleuropneumoniae serotype 7 (strain AP76)).